The chain runs to 676 residues: MGGLSLLQLPRDKFRKSSFFVWVIILFQKAFSMPLGVVTNSTLEVTEIDQLVCKDHLASTDQLKSVGLNLEGSGVSTDIPSATKRWGFRSGVPPKVVSYEAGEWAENCYNLEIKKPDGSECLPPPPDGVRGFPRCRYVHKAQGTGPCPGDYAFHKDGAFFLYDRLASTVIYRGVNFAEGVIAFLILAKPKETFLQSPPIREAVNYTENTSSYYATSYLEYEIENFGAQHSTTLFKIDNNTFVRLDRPHTPQFLFQLNDTIHLHQQLSNTTGRLIWTLDANINADIGEWAFWENKKNLSEQLRGEELSFEALSLNETEDDDAASSRITKGRISDRATRKYSDLVPKNSPGMVPLHIPEGETTLPSQNSTEGRRVGVNTQETITETAATIIGTNGNHMQISTIGIRPSSSQIPSSSPTTAPSPEAQTPTTHTSGPSVMATEEPTTPPGSSPGPTTEAPTLTTPENITTAVKTVLPQESTSNGLITSTVTGILGSLGLRKRSRRQTNTKATGKCNPNLHYWTAQEQHNAAGIAWIPYFGPGAEGIYTEGLMHNQNALVCGLRQLANETTQALQLFLRATTELRTYTILNRKAIDFLLRRWGGTCRILGPDCCIEPHDWTKNITDKINQIIHDFIDNPLPNQDNDDNWWTGWRQWIPAGIGITGIIIAIIALLCVCKLLC.

The signal sequence occupies residues 1–32; that stretch reads MGGLSLLQLPRDKFRKSSFFVWVIILFQKAFS. A receptor binding region spans residues 33–185; the sequence is MPLGVVTNST…FAEGVIAFLI (153 aa). Over 33 to 650 the chain is Extracellular; the sequence is MPLGVVTNST…DDNWWTGWRQ (618 aa). N-linked (GlcNAc...) asparagine; by host glycosylation is present at Asn-40. 5 disulfides stabilise this stretch: Cys-53/Cys-609, Cys-108/Cys-135, Cys-121/Cys-147, Cys-511/Cys-556, and Cys-601/Cys-608. 8 N-linked (GlcNAc...) asparagine; by host glycosylation sites follow: Asn-204, Asn-208, Asn-238, Asn-257, Asn-268, Asn-296, Asn-314, and Asn-366. Residues 305 to 485 form a mucin-like region region; the sequence is ELSFEALSLN…STSNGLITST (181 aa). Disordered regions lie at residues 337–373 and 404–461; these read RKYS…GRRV and RPSS…LTTP. Composition is skewed to low complexity over residues 405–428 and 449–461; these read PSSS…TPTT and PGPT…LTTP. A glycan (N-linked (GlcNAc...) asparagine; by host) is linked at Asn-463. Residues 524–539 form a fusion peptide region; it reads HNAAGIAWIPYFGPGA. Residues 554–595 adopt a coiled-coil conformation; that stretch reads LVCGLRQLANETTQALQLFLRATTELRTYTILNRKAIDFLLR. An N-linked (GlcNAc...) asparagine; by host glycan is attached at Asn-563. Residues 615–634 adopt a coiled-coil conformation; the sequence is WTKNITDKINQIIHDFIDNP. N-linked (GlcNAc...) asparagine; by host glycosylation is present at Asn-618. The chain crosses the membrane as a helical span at residues 651–671; that stretch reads WIPAGIGITGIIIAIIALLCV. Residues Cys-670 and Cys-672 are each lipidated (S-palmitoyl cysteine; by host). The Cytoplasmic portion of the chain corresponds to 672-676; the sequence is CKLLC.

Belongs to the filoviruses glycoprotein family. As to quaternary structure, homotrimer; each monomer consists of a GP1 and a GP2 subunit linked by disulfide bonds. The resulting peplomers (GP1,2) protrude from the virus surface as spikes. Interacts with host integrin alpha-V/ITGAV. Interacts with host CLEC10A. Binds also to host CD209 and CLEC4M/DC-SIGN(R). Interacts with host FOLR1. Interacts with BST2; this interaction inhibits the antiviral effect of BST2 and this allows viral release from infected cells. Interacts with host FCN1; this interaction enhances viral entry. Interacts with host TLR4; this interaction induces cell death in T-lymphocytes or proinflammatory cytokines and SOCS1 production in monocytes. In terms of assembly, interacts with host entry receptor NPC1. GP1 and GP2delta are part of GP1,2delta soluble complexes released by ectodomain shedding. In terms of processing, N-glycosylated. O-glycosylated in the mucin-like region. Post-translationally, palmitoylation of GP2 is not required for its function. In terms of processing, specific enzymatic cleavages in vivo yield mature proteins. The precursor is processed into GP1 and GP2 by host cell furin in the trans Golgi, and maybe by other host proteases, to yield the mature GP1 and GP2 proteins. The cleavage site corresponds to the furin optimal cleavage sequence [KR]-X-[KR]-R. This cleavage does not seem to be required for function. After the internalization of the virus into cell endosomes, GP1 C-terminus is removed by the endosomal proteases cathepsin B, cathepsin L, or both, leaving a 19-kDa N-terminal fragment which is further digested by cathepsin B. Proteolytic processing of GP1,2 by host ADAM17 can remove the transmembrane anchor of GP2 and leads to shedding of complexes consisting in GP1 and truncated GP2 (GP1,2delta).

The protein localises to the virion membrane. Its subcellular location is the host cell membrane. It is found in the secreted. Its function is as follows. Trimeric GP1,2 complexes form the virion surface spikes and mediate the viral entry processes, with GP1 acting as the receptor-binding subunit and GP2 as the membrane fusion subunit. At later times of infection, down-regulates the expression of various host cell surface molecules that are essential for immune surveillance and cell adhesion. Down-modulates several integrins including ITGA1, ITGA2, ITGA3, ITGA4, ITGA5, ITGA6, ITGAV and ITGB1. This decrease in cell adhesion molecules may lead to cell detachment, contributing to the disruption of blood vessel integrity and hemorrhages developed during infection (cytotoxicity). Interacts with host TLR4 and thereby stimulates the differentiation and activation of monocytes leading to bystander death of T-lymphocytes. Down-regulates as well the function of host natural killer cells. Counteracts the antiviral effect of host BST2/tetherin that restricts release of progeny virions from infected cells. However, cooperates with VP40 and host BST2 to activate canonical NF-kappa-B pathway in a manner dependent on neddylation. In terms of biological role, functions as a decoy for anti-GP1,2 antibodies thereby contributing to viral immune evasion. Interacts and activates host macrophages and dendritic cells inducing up-regulation of cytokine transcription. This effect is mediated throught activation of host TLR4. Functionally, responsible for binding to the receptor(s) on target cells. Interacts with CD209/DC-SIGN and CLEC4M/DC-SIGNR which act as cofactors for virus entry into dendritic cells (DCs) and endothelial cells. Binding to the macrophage specific lectin CLEC10A also seems to enhance virus infectivity. Interaction with FOLR1/folate receptor alpha may be a cofactor for virus entry in some cell types, although results are contradictory. Members of the Tyro3 receptor tyrosine kinase family also seem to be cell entry factors in filovirus infection. Once attached, the virions are internalized through clathrin-dependent endocytosis and/or macropinocytosis. After internalization of the virus into the endosomes of the host cell, proteolysis of GP1 by two cysteine proteases, CTSB/cathepsin B and CTSL/cathepsin L removes the glycan cap and allows GP1 binding to the host entry receptor NPC1. NPC1-binding, Ca(2+) and acidic pH induce a conformational change of GP2, which unmasks its fusion peptide and permit membranes fusion. Acts as a class I viral fusion protein. Under the current model, the protein has at least 3 conformational states: pre-fusion native state, pre-hairpin intermediate state, and post-fusion hairpin state. During viral and target cell membrane fusion, the coiled coil regions (heptad repeats) assume a trimer-of-hairpins structure, positioning the fusion peptide in close proximity to the C-terminal region of the ectodomain. The formation of this structure appears to drive apposition and subsequent fusion of viral and target cell membranes. Responsible for penetration of the virus into the cell cytoplasm by mediating the fusion of the membrane of the endocytosed virus particle with the endosomal membrane. Low pH in endosomes induces an irreversible conformational change in GP2, releasing the fusion hydrophobic peptide. The protein is Envelope glycoprotein (GP) of Sudan ebolavirus (strain Human/Uganda/Gulu/2000) (SEBOV).